The primary structure comprises 306 residues: tRNA dimethylallyltransferase (306 aa).

An ATP-binding site is contributed by 12–19 (GPTGTKKS).

Belongs to the IPP transferase family. In terms of assembly, monomer. Mg(2+) serves as cofactor.

It catalyses the reaction adenosine(37) in tRNA + dimethylallyl diphosphate = N(6)-dimethylallyladenosine(37) in tRNA + diphosphate. In terms of biological role, catalyzes the transfer of a dimethylallyl group onto the adenine at position 37 in tRNAs that read codons beginning with uridine, leading to the formation of N6-(dimethylallyl)adenosine (i(6)A). This chain is tRNA dimethylallyltransferase, found in Mycoplasmoides gallisepticum (strain R(low / passage 15 / clone 2)) (Mycoplasma gallisepticum).